The following is a 55-amino-acid chain: Small ribosomal subunit protein uS14 (55 aa).

Residues C20, C23, C38, and C41 each coordinate Zn(2+).

This sequence belongs to the universal ribosomal protein uS14 family. It depends on Zn(2+) as a cofactor.

This is Small ribosomal subunit protein uS14 (rps29) from Dictyostelium discoideum (Social amoeba).